Reading from the N-terminus, the 599-residue chain is Proteasome-associated ATPase (599 aa).

The interval 1–22 (MPHGHPGSQPDEGGELSNGSSS) is disordered. Residues 21–97 (SSGELTAQIR…LREEVDRLAQ (77 aa)) adopt a coiled-coil conformation. ATP is bound at residue 286–291 (GCGKTL). Residues 598-599 (YL) are docks into pockets in the proteasome alpha-ring.

Belongs to the AAA ATPase family. In terms of assembly, homohexamer. Assembles into a hexameric ring structure that caps the 20S proteasome core. Strongly interacts with the prokaryotic ubiquitin-like protein Pup through a hydrophobic interface; the interacting region of ARC lies in its N-terminal coiled-coil domain. There is one Pup binding site per ARC hexamer ring. Upon ATP-binding, the C-terminus of ARC interacts with the alpha-rings of the proteasome core, possibly by binding to the intersubunit pockets.

The protein operates within protein degradation; proteasomal Pup-dependent pathway. Its function is as follows. ATPase which is responsible for recognizing, binding, unfolding and translocation of pupylated proteins into the bacterial 20S proteasome core particle. May be essential for opening the gate of the 20S proteasome via an interaction with its C-terminus, thereby allowing substrate entry and access to the site of proteolysis. Thus, the C-termini of the proteasomal ATPase may function like a 'key in a lock' to induce gate opening and therefore regulate proteolysis. The protein is Proteasome-associated ATPase of Actinosynnema mirum (strain ATCC 29888 / DSM 43827 / JCM 3225 / NBRC 14064 / NCIMB 13271 / NRRL B-12336 / IMRU 3971 / 101).